Reading from the N-terminus, the 90-residue chain is Protein LURE 1.2 (90 aa).

An N-terminal signal peptide occupies residues 1–19; the sequence is MKLPIIFLTLLIFVSSCTS. An N-linked (GlcNAc...) asparagine glycan is attached at asparagine 23. Intrachain disulfides connect cysteine 58-cysteine 75, cysteine 61-cysteine 82, and cysteine 65-cysteine 84. A PRK6 binding region spans residues 67–87; the sequence is RRGKYIRTCSFERKLCRCSIS.

It belongs to the DEFL family. Interacts with MDIS1, MIK1, MIK2 and TDR/PXY, but not with MDIS2. Binds to PRK6 LRRs. As to expression, expressed in the pistil. Detected exclusively in the synergid cells.

The protein localises to the secreted. In terms of biological role, pollen tube attractants guiding pollen tubes to the ovular micropyle. Attracts specifically pollen tubes from A.thaliana, but not those from A.lyrata. Triggers endocytosis of MDIS1 in the pollen tube tip. This Arabidopsis thaliana (Mouse-ear cress) protein is Protein LURE 1.2.